The primary structure comprises 94 residues: uncharacterized protein (94 aa).

A run of 2 helical transmembrane segments spans residues 7 to 24 and 39 to 61; these read IFFI…SFNV and AVPI…LLFL. The segment at 68–94 is disordered; sequence TRKQKREDSPTSAPTGGVSSPEHVDVP.

Its subcellular location is the cell membrane. This is an uncharacterized protein from Treponema pallidum (strain Nichols).